The primary structure comprises 329 residues: Probable acyltransferase FabY (329 aa).

The region spanning 18 to 162 (YHLRVPQTEE…RHFLMIKPVA (145 aa)) is the N-acetyltransferase domain.

This sequence belongs to the acetyltransferase family. FabY subfamily.

It functions in the pathway lipid metabolism; fatty acid biosynthesis. Its function is as follows. Supports initiation of fatty acid biosynthesis in the absence of FabH. The sequence is that of Probable acyltransferase FabY from Escherichia coli O157:H7.